The primary structure comprises 353 residues: Photosystem II protein D1 (353 aa).

Position 2 is an N-acetylthreonine (threonine 2). Residue threonine 2 is modified to Phosphothreonine. Transmembrane regions (helical) follow at residues 29–46 (YIGWFGVLMIPTLLTATS), 118–133 (HFLLGVACYMGREWEL), and 142–156 (WIAVAYSAPVAAATA). Position 118 (histidine 118) interacts with chlorophyll a. Pheophytin a is bound at residue tyrosine 126. 2 residues coordinate [CaMn4O5] cluster: aspartate 170 and glutamate 189. Residues 197–218 (FHMLGVAGVFGGSLFSAMHGSL) traverse the membrane as a helical segment. Histidine 198 lines the chlorophyll a pocket. A quinone is bound by residues histidine 215 and 264–265 (SF). Histidine 215 lines the Fe cation pocket. Residue histidine 272 participates in Fe cation binding. The helical transmembrane segment at 274–288 (FLAAWPVVGIWFTAL) threads the bilayer. [CaMn4O5] cluster contacts are provided by histidine 332, glutamate 333, aspartate 342, and alanine 344. The propeptide occupies 345 to 353 (AVEAPSTNG).

This sequence belongs to the reaction center PufL/M/PsbA/D family. In terms of assembly, PSII is composed of 1 copy each of membrane proteins PsbA, PsbB, PsbC, PsbD, PsbE, PsbF, PsbH, PsbI, PsbJ, PsbK, PsbL, PsbM, PsbT, PsbX, PsbY, PsbZ, Psb30/Ycf12, at least 3 peripheral proteins of the oxygen-evolving complex and a large number of cofactors. It forms dimeric complexes. The cofactor is The D1/D2 heterodimer binds P680, chlorophylls that are the primary electron donor of PSII, and subsequent electron acceptors. It shares a non-heme iron and each subunit binds pheophytin, quinone, additional chlorophylls, carotenoids and lipids. D1 provides most of the ligands for the Mn4-Ca-O5 cluster of the oxygen-evolving complex (OEC). There is also a Cl(-1) ion associated with D1 and D2, which is required for oxygen evolution. The PSII complex binds additional chlorophylls, carotenoids and specific lipids.. Tyr-161 forms a radical intermediate that is referred to as redox-active TyrZ, YZ or Y-Z. In terms of processing, C-terminally processed by CTPA; processing is essential to allow assembly of the oxygen-evolving complex and thus photosynthetic growth.

It is found in the plastid. Its subcellular location is the chloroplast thylakoid membrane. The enzyme catalyses 2 a plastoquinone + 4 hnu + 2 H2O = 2 a plastoquinol + O2. Functionally, photosystem II (PSII) is a light-driven water:plastoquinone oxidoreductase that uses light energy to abstract electrons from H(2)O, generating O(2) and a proton gradient subsequently used for ATP formation. It consists of a core antenna complex that captures photons, and an electron transfer chain that converts photonic excitation into a charge separation. The D1/D2 (PsbA/PsbD) reaction center heterodimer binds P680, the primary electron donor of PSII as well as several subsequent electron acceptors. This is Photosystem II protein D1 from Ceratophyllum demersum (Rigid hornwort).